The following is a 132-amino-acid chain: MSRLIFFILVTAIYFVGNEACKEIEIVIKNTLGPSRILQYHCRSGNTNVGVQYLNFKGTRIIKFKDDGTERSRWNCLFRQGINMKFFTEVEAYRPDLKHPLCGKRYELSARMDAIYFKMDERPPQPLNKWRS.

A signal peptide spans Met-1–Ala-20.

Belongs to the plant self-incompatibility (S1) protein family.

Its subcellular location is the secreted. This chain is S-protein homolog 15, found in Arabidopsis thaliana (Mouse-ear cress).